The sequence spans 123 residues: Guanine nucleotide exchange factor MSS4 (123 aa).

Residue methionine 1 is modified to N-acetylmethionine. The MSS4 domain maps to 9–123 (ELVSAEGRNR…YVALERVSHE (115 aa)). Residues cysteine 23, cysteine 26, cysteine 94, and cysteine 97 each coordinate Zn(2+).

It belongs to the DSS4/MSS4 family. Interacts with RAB8A.

In terms of biological role, guanine-nucleotide-releasing protein that acts on members of the SEC4/YPT1/RAB subfamily. Stimulates GDP release from both YPT1, RAB3A and RAB10, but is less active on these proteins than on the SEC4 protein. Might play a general role in vesicular transport. This is Guanine nucleotide exchange factor MSS4 from Mus musculus (Mouse).